The sequence spans 243 residues: MNLIIDIGNTVAKVALFDRTSMVEVVYDSNQSLDSLEAVCNKYDVRKAIVATVIDLNECVLAQLNKLPVPVLWLDSHTPLPVINLYETPETLGYDRMAAVVAAHDQFPGKDILVIDAGTCITYEFVDSLGQYHGGNISPGLWMRLKALHQFTGRLPLVHAEGRMPDMGKDTETAIRAGVKKGIEYEITGYIAAMKHKYPELLVFLTGGDDFSFDTKLKSVIFADRFLVLKGLNRILNYNNGRI.

6 to 13 (DIGNTVAK) provides a ligand contact to ATP. Substrate is bound by residues Tyr-86 and 93–96 (GYDR). Asp-95 acts as the Proton acceptor in catalysis. Asp-116 contributes to the K(+) binding site. Position 119 (Thr-119) interacts with ATP. Residue Thr-171 participates in substrate binding.

Belongs to the type III pantothenate kinase family. In terms of assembly, homodimer. It depends on NH4(+) as a cofactor. The cofactor is K(+).

It is found in the cytoplasm. The enzyme catalyses (R)-pantothenate + ATP = (R)-4'-phosphopantothenate + ADP + H(+). It participates in cofactor biosynthesis; coenzyme A biosynthesis; CoA from (R)-pantothenate: step 1/5. Its function is as follows. Catalyzes the phosphorylation of pantothenate (Pan), the first step in CoA biosynthesis. The polypeptide is Type III pantothenate kinase (Bacteroides fragilis (strain ATCC 25285 / DSM 2151 / CCUG 4856 / JCM 11019 / LMG 10263 / NCTC 9343 / Onslow / VPI 2553 / EN-2)).